The chain runs to 632 residues: ATP-dependent zinc metalloprotease FtsH (632 aa).

Residues 1–9 (MKPTNEPKK) are Cytoplasmic-facing. The helical transmembrane segment at 10 to 30 (PFFQSPIVLAVLGGILLIFFL) threads the bilayer. Over 31-116 (RSFNSDGSFS…INYSGFSESN (86 aa)) the chain is Periplasmic. A helical transmembrane segment spans residues 117 to 137 (FFTDMLGWLMPILVILGLWMF). Over 138–632 (MANRMQKNMG…RLIPLEEQAS (495 aa)) the chain is Cytoplasmic. 210–217 (GPPGTGKT) is an ATP binding site. Position 434 (His434) interacts with Zn(2+). Residue Glu435 is part of the active site. His438 and Asp511 together coordinate Zn(2+).

It in the central section; belongs to the AAA ATPase family. In the C-terminal section; belongs to the peptidase M41 family. As to quaternary structure, homohexamer. Requires Zn(2+) as cofactor.

The protein localises to the cell inner membrane. Functionally, acts as a processive, ATP-dependent zinc metallopeptidase for both cytoplasmic and membrane proteins. Plays a role in the quality control of integral membrane proteins. The protein is ATP-dependent zinc metalloprotease FtsH of Helicobacter pylori (strain J99 / ATCC 700824) (Campylobacter pylori J99).